The sequence spans 371 residues: MSFRKVHIAIILLAAVVFLLILHHNILGLTDILTRQSSDSAPLVFQRLEALRDAHESPPEERQGEEIAVVIPGVEERLGGLVAAINSISSNTKSNVVFYIITTNDTKGHIRSWLDGTGLKRVTYKLLAFDTRVLDGKVRVDAGAEPVKPMTFARFYLPNLLPETKKAIYLDDDVIVQDDIRDLYNTPLRPGHAAAFSDDCDSVTSKFPVRGAANQYNYIGFLDYKKERIRSLGMRANTCSFNPGVFVANLTEWRRQNVTRQLEKWMELDVAEELYSKTLSASITAPPLLIVFYQRHSNLDPLWHVRHLGSSSGKRYSPQFVKAAKLLHWNGHFKPWGRTSSYPEVWEKWFIPDPMGQFAPIRRHGEADGTK.

Residues 1–7 (MSFRKVH) lie on the Cytoplasmic side of the membrane. A helical; Signal-anchor for type II membrane protein transmembrane segment spans residues 8-28 (IAIILLAAVVFLLILHHNILG). Topologically, residues 29–371 (LTDILTRQSS…RRHGEADGTK (343 aa)) are lumenal. N-linked (GlcNAc...) asparagine glycosylation is found at asparagine 104, asparagine 249, and asparagine 257.

Belongs to the glycosyltransferase 8 family.

It localises to the membrane. This Xenopus tropicalis (Western clawed frog) protein is Glycosyltransferase 8 domain-containing protein 1 (glt8d1).